The following is a 462-amino-acid chain: A-type ATP synthase subunit B (462 aa).

Belongs to the ATPase alpha/beta chains family. As to quaternary structure, has multiple subunits with at least A(3), B(3), C, D, E, F, H, I and proteolipid K(x).

It is found in the cell membrane. Functionally, component of the A-type ATP synthase that produces ATP from ADP in the presence of a proton gradient across the membrane. The B chain is a regulatory subunit. The protein is A-type ATP synthase subunit B of Methanobrevibacter smithii (strain ATCC 35061 / DSM 861 / OCM 144 / PS).